A 179-amino-acid polypeptide reads, in one-letter code: UPF0227 protein Shew185_2404 (179 aa).

It belongs to the UPF0227 family.

The protein is UPF0227 protein Shew185_2404 of Shewanella baltica (strain OS185).